A 208-amino-acid polypeptide reads, in one-letter code: Uracil phosphoribosyltransferase (208 aa).

Residues R78, R103, and 130–138 contribute to the 5-phospho-alpha-D-ribose 1-diphosphate site; that span reads DPMLATGGS. Uracil is bound by residues I193 and 198–200; that span reads GDA. D199 lines the 5-phospho-alpha-D-ribose 1-diphosphate pocket.

Belongs to the UPRTase family. It depends on Mg(2+) as a cofactor.

It carries out the reaction UMP + diphosphate = 5-phospho-alpha-D-ribose 1-diphosphate + uracil. Its pathway is pyrimidine metabolism; UMP biosynthesis via salvage pathway; UMP from uracil: step 1/1. With respect to regulation, allosterically activated by GTP. Its function is as follows. Catalyzes the conversion of uracil and 5-phospho-alpha-D-ribose 1-diphosphate (PRPP) to UMP and diphosphate. The chain is Uracil phosphoribosyltransferase from Haemophilus influenzae (strain 86-028NP).